Here is a 344-residue protein sequence, read N- to C-terminus: Methionine import ATP-binding protein MetN (344 aa).

The 240-residue stretch at 2–241 (IELKNIGKQF…PTTQLAQQFI (240 aa)) folds into the ABC transporter domain. Position 38–45 (38–45 (GASGAGKS)) interacts with ATP.

It belongs to the ABC transporter superfamily. Methionine importer (TC 3.A.1.24) family. As to quaternary structure, the complex is composed of two ATP-binding proteins (MetN), two transmembrane proteins (MetI) and a solute-binding protein (MetQ).

It localises to the cell inner membrane. The enzyme catalyses L-methionine(out) + ATP + H2O = L-methionine(in) + ADP + phosphate + H(+). It catalyses the reaction D-methionine(out) + ATP + H2O = D-methionine(in) + ADP + phosphate + H(+). Functionally, part of the ABC transporter complex MetNIQ involved in methionine import. Responsible for energy coupling to the transport system. This is Methionine import ATP-binding protein MetN from Haemophilus ducreyi (strain 35000HP / ATCC 700724).